We begin with the raw amino-acid sequence, 181 residues long: CASP-like protein 2C1 (181 aa).

The Cytoplasmic portion of the chain corresponds to 1–7 (MALEIPK). The helical transmembrane segment at 8–28 (IEAILRGIAILLLVSTACLVG) threads the bilayer. Residues 29-49 (LDSQTKFVIVYEKEVTYKDLH) lie on the Extracellular side of the membrane. The helical transmembrane segment at 50 to 70 (ALVVLVYVDAVAAAYNLLQLC) threads the bilayer. Residues 71-98 (RCSVSALSKGNFKGSYRYLSWACFVLDQ) lie on the Cytoplasmic side of the membrane. A helical transmembrane segment spans residues 99–119 (LAAYTTFAAHSAALQHSVLGI). Over 120–140 (TGAKVFQWMKWCNRFTRFCFQ) the chain is Extracellular. The helical transmembrane segment at 141–161 (IGGALTCGYIASVLMVMISFI) threads the bilayer. Residues 162–181 (SAFNLFRLYSPKHFLRLKGT) are Cytoplasmic-facing.

It belongs to the Casparian strip membrane proteins (CASP) family. In terms of assembly, homodimer and heterodimers.

It is found in the cell membrane. This Populus trichocarpa (Western balsam poplar) protein is CASP-like protein 2C1.